The sequence spans 113 residues: Large ribosomal subunit protein bL19 (113 aa).

It belongs to the bacterial ribosomal protein bL19 family.

Its function is as follows. This protein is located at the 30S-50S ribosomal subunit interface and may play a role in the structure and function of the aminoacyl-tRNA binding site. The protein is Large ribosomal subunit protein bL19 of Carboxydothermus hydrogenoformans (strain ATCC BAA-161 / DSM 6008 / Z-2901).